A 398-amino-acid chain; its full sequence is tRNA-specific 2-thiouridylase MnmA (398 aa).

Residues 18-25 (AMSGGVDS) and Leu44 contribute to the ATP site. Cys112 acts as the Nucleophile in catalysis. The cysteines at positions 112 and 213 are disulfide-linked. Gly136 lines the ATP pocket. Positions 163 to 165 (RDQ) are interaction with tRNA. Cys213 serves as the catalytic Cysteine persulfide intermediate.

The protein belongs to the MnmA/TRMU family.

The protein localises to the cytoplasm. It carries out the reaction S-sulfanyl-L-cysteinyl-[protein] + uridine(34) in tRNA + AH2 + ATP = 2-thiouridine(34) in tRNA + L-cysteinyl-[protein] + A + AMP + diphosphate + H(+). Catalyzes the 2-thiolation of uridine at the wobble position (U34) of tRNA, leading to the formation of s(2)U34. This is tRNA-specific 2-thiouridylase MnmA from Rhizobium meliloti (strain 1021) (Ensifer meliloti).